A 334-amino-acid polypeptide reads, in one-letter code: MSLDINQIALHQLIKRDEQNLELVLRDSLLEPTDTVSEMVAELHRVYSAKNKAYGLFSEESELAQALRLQRQGEEDFLAFSRAATGRLRDELAKYPFADGGFVLFCHYRYLAVEYLLICVLNNLSSMRVNENLDINPTHYLDINHADIVARIDLTEWETNPESTRYLTFLKGRVGRKVADFFMDFLGASEGLNAKAQNRGLLQAVDDFTAEAQLDKAERQNVRQQVYSYCNEQLQAGEEIELESLSKELAGVSEVSFTEFAAEKGYELEESFPADRSTLRQLTKFAGSGGGLTINFDAMLLGERIFWDPATDTLTIKGTPPNLRDQLQRRTSGN.

This sequence belongs to the YejK family.

The protein resides in the cytoplasm. It is found in the nucleoid. This Escherichia fergusonii (strain ATCC 35469 / DSM 13698 / CCUG 18766 / IAM 14443 / JCM 21226 / LMG 7866 / NBRC 102419 / NCTC 12128 / CDC 0568-73) protein is Nucleoid-associated protein YejK.